The sequence spans 397 residues: DNA-directed RNA polymerase subunit Rpo1C (397 aa).

It belongs to the RNA polymerase beta' chain family. As to quaternary structure, part of the RNA polymerase complex.

Its subcellular location is the cytoplasm. It catalyses the reaction RNA(n) + a ribonucleoside 5'-triphosphate = RNA(n+1) + diphosphate. Functionally, DNA-dependent RNA polymerase (RNAP) catalyzes the transcription of DNA into RNA using the four ribonucleoside triphosphates as substrates. Forms part of the jaw domain. This Methanococcus aeolicus (strain ATCC BAA-1280 / DSM 17508 / OCM 812 / Nankai-3) protein is DNA-directed RNA polymerase subunit Rpo1C.